The chain runs to 1057 residues: MENILNFNEPLDINLLDQIVSVLYNPLSNKNDIKAAQMVLGKFQEHPDAWSKVDTILETSKIVQTKFIALVIMDSLIKYRWKSLPREQCEGIKNYIVSLIIRLSSDPQTSSREKLLVNKLNLVFVQILKQEWTTNWSTFIPEIISSSKTNESLCENNMVILRLLSEEIFNFSEEQMTQTKIQTLKITFEKEFSLINDLCFYILENATRASLIKATLETLQRFLNWVPLHYIIEVNGGIAEPSKLVKLLLHKYFPEPLFRNSTLKCLTEIGNLNLGNQQYDAVFIAIIDKFMNQIKFIKPDPSKIPQDYEDGDQGERSFIHTVSLFLTGFFKSHLKIMENSLNIPYLTLAHEILVNISNIDELELFKICLEYWNFLSSNLYSDIATFTTTLLSTPPRLQLYKSVLSKVRVVLIDHMAKPEEVIVVEDENGNIVRETTKDTDSLTLYESMRETLIFLTHLDSENTQHIMLEKLQTLISGREFTFQRLNTLCWAIGSISGAQNKEQEKRFLVTVIKDLLELCQNKKGKDNKAVIASDIMYIVGQYPRFLKDHWKFLKTVVNKLFEFMHESHPGVQDMACDTFLKISKQCKRKFVVLQVEESQPFINELLNQLSTTIAHLEQSQIHTFYEAVGYMIASSSDAAFREKLVNKFMELPNHSWLQIMGAASVKVESLLTVEVARDILNLIKTNNRAAMSLENCYITQISKIYLDLLNVYRTYSDHISRNPNIYRETLGQAMRSVKKETLKLLETFIEKSSDKQVIYSNFLQPLLEAVLGDYRTNIPETRDPEVLSLMTAIITSLKQLVHPEVPKILEAVFETTLSMITKNFEDYPYHRINFFNLIRAINSNAFTVFHNLHPQQFKLLIDCVVWAFKHTERNISETGLHILKELIENVSKNSDVANVFFKTYLVSLLNDILYILTDSFHKSGFALECDILRMMFQVVENGVVKIPLFDPQQANFPSNSEYVKEIVVTFLSASPNVSRPQIQAFVTRLFNLANINNNDFKSATRDFLITLKEWKSHENADLYSDEKNIEKALALKKQSMIPGMVRPNDVNLEMNDL.

The 67-residue stretch at 36–102 (AQMVLGKFQE…KNYIVSLIIR (67 aa)) folds into the Importin N-terminal domain. 11 HEAT repeats span residues 239–275 (AEPSKLVKLLLHKYFPEPLFRNSTLKCLTEIGNLNLG), 281–321 (AVFI…FIHT), 462–501 (NTQHIMLEKLQTLISGREFTFQRLNTLCWAIGSISGAQNK), 506–544 (RFLVTVIKDLLELCQNKKGKDNKAVIASDIMYIVGQYPR), 551–588 (KFLKTVVNKLFEFMHESHPGVQDMACDTFLKISKQCKR), 596–633 (EESQPFINELLNQLSTTIAHLEQSQIHTFYEAVGYMIA), 739–776 (KETLKLLETFIEKSSDKQVIYSNFLQPLLEAVLGDYRT), 781–818 (TRDPEVLSLMTAIITSLKQLVHPEVPKILEAVFETTLS), 855–892 (QQFKLLIDCVVWAFKHTERNISETGLHILKELIENVSK), 902–925 (KTYLVSLLNDILYILTDSFHKSGF), and 926–965 (ALECDILRMMFQVVENGVVKIPLFDPQQANFPSNSEYVKE).

This sequence belongs to the exportin family. Component of a nuclear export receptor complex.

The protein resides in the nucleus. It localises to the cytoplasm. The protein localises to the perinuclear region. Its function is as follows. Mediates the nuclear export of cellular proteins (cargos) bearing a leucine-rich nuclear export signal (NES). This is Exportin-1 (xpo1) from Dictyostelium discoideum (Social amoeba).